The primary structure comprises 278 residues: Phosphatidylglycerol--prolipoprotein diacylglyceryl transferase (278 aa).

Transmembrane regions (helical) follow at residues 19 to 39, 49 to 69, 83 to 103, and 112 to 132; these read WYGI…INEG, FIDF…IYYV, IIAI…GLIV, and MLPP…AQVI. Residue R134 coordinates a 1,2-diacyl-sn-glycero-3-phospho-(1'-sn-glycerol). 3 consecutive transmembrane segments (helical) span residues 174 to 194, 204 to 224, and 235 to 255; these read QPTY…ILSL, GEVF…VEGM, and IRVS…LWVY.

Belongs to the Lgt family.

The protein localises to the cell membrane. It catalyses the reaction L-cysteinyl-[prolipoprotein] + a 1,2-diacyl-sn-glycero-3-phospho-(1'-sn-glycerol) = an S-1,2-diacyl-sn-glyceryl-L-cysteinyl-[prolipoprotein] + sn-glycerol 1-phosphate + H(+). It participates in protein modification; lipoprotein biosynthesis (diacylglyceryl transfer). Its function is as follows. Catalyzes the transfer of the diacylglyceryl group from phosphatidylglycerol to the sulfhydryl group of the N-terminal cysteine of a prolipoprotein, the first step in the formation of mature lipoproteins. This Lactobacillus gasseri (strain ATCC 33323 / DSM 20243 / BCRC 14619 / CIP 102991 / JCM 1131 / KCTC 3163 / NCIMB 11718 / NCTC 13722 / AM63) protein is Phosphatidylglycerol--prolipoprotein diacylglyceryl transferase.